Here is a 369-residue protein sequence, read N- to C-terminus: Probable trehalose-phosphate phosphatase I (369 aa).

It belongs to the trehalose phosphatase family. Requires a divalent metal cation as cofactor.

The catalysed reaction is alpha,alpha-trehalose 6-phosphate + H2O = alpha,alpha-trehalose + phosphate. It participates in glycan biosynthesis; trehalose biosynthesis. Its function is as follows. Removes the phosphate from trehalose 6-phosphate to produce free trehalose. Trehalose accumulation in plant may improve abiotic stress tolerance. The protein is Probable trehalose-phosphate phosphatase I (TPPI) of Arabidopsis thaliana (Mouse-ear cress).